The chain runs to 376 residues: MLVFYGFLSSRSISHLKVYLVGGAVRDQLLGLPVKEKDWVVVGATPEEMTARGFKPVGKEFPVFLHPETHEEYALARTERKVAKGYKGFTFYAAPDVSLEEDLKRRDLTINAIAETPEGQLIDPYGGQEDLKNKVLRHVSVAFQEDPVRVLRLARLATKFPDFSIHPDTLELMKKMVCAGEIDALVPERIWQELNRALGNEKPTRFFTVLNQCGALAILFPEIKMEGKGMAALQSVTDKTPSPLIRFATLQSDLPPEIIQKLAGRYRVPNEYADLAILVARFGSDYVNLNRMDETSLLNFLLKTDALRRQERFDQFIFTCDLISSTTSSQPKKIKEIIKAVKSVDIKPLQEKQLKGEAFAKALEKLRLEAIRTLIS.

Residues glycine 23 and arginine 26 each coordinate ATP. CTP-binding residues include glycine 23 and arginine 26. Mg(2+)-binding residues include glutamate 36 and aspartate 38. Residues arginine 106, arginine 152, and arginine 155 each contribute to the ATP site. Positions 106, 152, and 155 each coordinate CTP.

This sequence belongs to the tRNA nucleotidyltransferase/poly(A) polymerase family. Bacterial CCA-adding enzyme type 2 subfamily. Mg(2+) serves as cofactor.

The enzyme catalyses a tRNA precursor + 2 CTP + ATP = a tRNA with a 3' CCA end + 3 diphosphate. It catalyses the reaction a tRNA with a 3' CCA end + 2 CTP + ATP = a tRNA with a 3' CCACCA end + 3 diphosphate. Its function is as follows. Catalyzes the addition and repair of the essential 3'-terminal CCA sequence in tRNAs without using a nucleic acid template. Adds these three nucleotides in the order of C, C, and A to the tRNA nucleotide-73, using CTP and ATP as substrates and producing inorganic pyrophosphate. tRNA 3'-terminal CCA addition is required both for tRNA processing and repair. Also involved in tRNA surveillance by mediating tandem CCA addition to generate a CCACCA at the 3' terminus of unstable tRNAs. While stable tRNAs receive only 3'-terminal CCA, unstable tRNAs are marked with CCACCA and rapidly degraded. This chain is CCA-adding enzyme, found in Coxiella burnetii (strain RSA 331 / Henzerling II).